A 317-amino-acid chain; its full sequence is Insulin-like growth factor-binding protein 2 (317 aa).

An N-terminal signal peptide occupies residues M1 to A33. The IGFBP N-terminal domain occupies V35 to H126. Disulfide bonds link C39–C76, C42–C78, C50–C79, C68–C82, C90–C103, and C97–C123. Disordered regions lie at residues H126–S146 and Q190–P218. Residues R216–C298 enclose the Thyroglobulin type-1 domain. 3 disulfide bridges follow: C219-C253, C264-C275, and C277-C298. The Cell attachment site motif lies at R293–D295.

Interacts with IGF1. Interacts with IGF2. Interacts (via RGD motif) with integrin alpha5/ITGA5; this interaction induces cell migration, adhesion or apoptosis according to the context. Interacts with PTPRB; this interaction leads to PTPRB dimerization and inactivation. Cleaved by MMP9 leading to release of free IGF2 from IGFBP2-IGF2 complex, which contributes to enhance the motility and the growth of astrocytes. Post-translationally, O-glycosylated.

The protein localises to the secreted. Functionally, multifunctional protein that plays a critical role in regulating the availability of IGFs such as IGF1 and IGF2 to their receptors and thereby regulates IGF-mediated cellular processes including proliferation, differentiation, and apoptosis in a cell-type specific manner. Functions coordinately with receptor protein tyrosine phosphatase beta/PTPRB and the IGF1 receptor to regulate IGF1-mediated signaling by stimulating the phosphorylation of PTEN leading to its inactivation and AKT1 activation. Plays a positive role in cell migration via interaction with integrin alpha5/ITGA5 through an RGD motif. Additionally, interaction with ITGA5/ITGB1 enhances the adhesion of endothelial progenitor cells to endothelial cells. Upon mitochondrial damage, facilitates apoptosis with ITGA5 of podocytes, and then activates the phosphorylation of focal adhesion kinase (FAK)-mediated mitochondrial injury. The sequence is that of Insulin-like growth factor-binding protein 2 (IGFBP2) from Bos taurus (Bovine).